A 556-amino-acid chain; its full sequence is 2-succinyl-5-enolpyruvyl-6-hydroxy-3-cyclohexene-1-carboxylate synthase (556 aa).

The protein belongs to the TPP enzyme family. MenD subfamily. Homodimer. Mg(2+) is required as a cofactor. Requires Mn(2+) as cofactor. It depends on thiamine diphosphate as a cofactor.

The catalysed reaction is isochorismate + 2-oxoglutarate + H(+) = 5-enolpyruvoyl-6-hydroxy-2-succinyl-cyclohex-3-ene-1-carboxylate + CO2. Its pathway is quinol/quinone metabolism; 1,4-dihydroxy-2-naphthoate biosynthesis; 1,4-dihydroxy-2-naphthoate from chorismate: step 2/7. It functions in the pathway quinol/quinone metabolism; menaquinone biosynthesis. In terms of biological role, catalyzes the thiamine diphosphate-dependent decarboxylation of 2-oxoglutarate and the subsequent addition of the resulting succinic semialdehyde-thiamine pyrophosphate anion to isochorismate to yield 2-succinyl-5-enolpyruvyl-6-hydroxy-3-cyclohexene-1-carboxylate (SEPHCHC). This chain is 2-succinyl-5-enolpyruvyl-6-hydroxy-3-cyclohexene-1-carboxylate synthase, found in Staphylococcus epidermidis (strain ATCC 12228 / FDA PCI 1200).